The chain runs to 522 residues: BAR/IMD domain-containing adapter protein 2-like 2 (522 aa).

Residues Met1 to Leu239 enclose the IMD domain. Disordered stretches follow at residues Ser220 to Gly325 and Pro404 to Pro502. Phosphoserine occurs at positions 231, 272, and 303. Residues Arg297–Phe317 are compositionally biased toward polar residues. The 64-residue stretch at Gly324 to Glu387 folds into the SH3 domain. Residues Ser443–Arg456 are compositionally biased toward low complexity. The span at Ala457–Pro466 shows a compositional bias: pro residues. A phosphoserine mark is found at Ser472 and Ser475.

Expressed in the epithelial layer of the intestine and in the kidney.

Its subcellular location is the cell membrane. The protein localises to the cell junction. It localises to the cytoplasmic vesicle membrane. In terms of biological role, phosphoinositides-binding protein that induces the formation of planar or gently curved membrane structures. Binds to phosphoinositides, including to phosphatidylinositol 4,5-bisphosphate (PtdIns(4,5)P2) headgroups. There seems to be no clear preference for a specific phosphoinositide. In Mus musculus (Mouse), this protein is BAR/IMD domain-containing adapter protein 2-like 2 (Baiap2l2).